Consider the following 248-residue polypeptide: Myelin protein P0 (248 aa).

Residues M1 to A29 form the signal peptide. In terms of domain architecture, Ig-like V-type spans I30–T143. Residues I30–R153 lie on the Extracellular side of the membrane. A disulfide bond links C50 and C127. Residue N122 is glycosylated (N-linked (GlcNAc...) (complex) asparagine). A helical membrane pass occupies residues Y154–I179. Residues R180–K248 lie on the Cytoplasmic side of the membrane. A Phosphoserine; by PKC modification is found at S210. The disordered stretch occupies residues M222–K248. Basic and acidic residues predominate over residues D224–K248. Residues S226 and S228 each carry the phosphoserine modification. S233 carries the phosphoserine; by PKC modification. S237 is modified (phosphoserine). At S243 the chain carries Phosphoserine; by PKC.

The protein belongs to the myelin P0 protein family. In terms of assembly, homodimer and homotetramer. In terms of processing, N-glycosylated; contains sulfate-substituted glycan. In terms of tissue distribution, found only in peripheral nervous system Schwann cells.

The protein resides in the cell membrane. In terms of biological role, is an adhesion molecule necessary for normal myelination in the peripheral nervous system. It mediates adhesion between adjacent myelin wraps and ultimately drives myelin compaction. The chain is Myelin protein P0 (Mpz) from Rattus norvegicus (Rat).